Here is a 97-residue protein sequence, read N- to C-terminus: YcgL domain-containing protein Maqu_1609 (97 aa).

The YcgL domain occupies 5 to 89 (EFVSVFRSSK…EQDTYIVDFK (85 aa)).

In Marinobacter nauticus (strain ATCC 700491 / DSM 11845 / VT8) (Marinobacter aquaeolei), this protein is YcgL domain-containing protein Maqu_1609.